A 121-amino-acid polypeptide reads, in one-letter code: Ribosome-binding factor A (121 aa).

This sequence belongs to the RbfA family. In terms of assembly, monomer. Binds 30S ribosomal subunits, but not 50S ribosomal subunits or 70S ribosomes.

The protein resides in the cytoplasm. Its function is as follows. One of several proteins that assist in the late maturation steps of the functional core of the 30S ribosomal subunit. Associates with free 30S ribosomal subunits (but not with 30S subunits that are part of 70S ribosomes or polysomes). Required for efficient processing of 16S rRNA. May interact with the 5'-terminal helix region of 16S rRNA. The sequence is that of Ribosome-binding factor A from Paraburkholderia phytofirmans (strain DSM 17436 / LMG 22146 / PsJN) (Burkholderia phytofirmans).